The following is a 173-amino-acid chain: Zinc resistance-associated protein homolog (173 aa).

The first 28 residues, 1–28, serve as a signal peptide directing secretion; it reads MNSKRIALGIIALATVVSLGTAANNAFA.

This sequence belongs to the ZraP family.

The protein is Zinc resistance-associated protein homolog of Nitratidesulfovibrio vulgaris (strain ATCC 29579 / DSM 644 / CCUG 34227 / NCIMB 8303 / VKM B-1760 / Hildenborough) (Desulfovibrio vulgaris).